A 59-amino-acid chain; its full sequence is Cuticle protein 7 isoform a (59 aa).

Q1 bears the Pyrrolidone carboxylic acid mark.

This is Cuticle protein 7 isoform a from Limulus polyphemus (Atlantic horseshoe crab).